Consider the following 386-residue polypeptide: Protein RecA (386 aa).

76 to 83 contacts ATP; it reads GPESSGKT. Residues 362–386 form a disordered region; the sequence is FDDEDDDFDASTAPAGTFTEVTTEN.

It belongs to the RecA family.

It localises to the cytoplasm. Functionally, can catalyze the hydrolysis of ATP in the presence of single-stranded DNA, the ATP-dependent uptake of single-stranded DNA by duplex DNA, and the ATP-dependent hybridization of homologous single-stranded DNAs. It interacts with LexA causing its activation and leading to its autocatalytic cleavage. This is Protein RecA from Corynebacterium efficiens (strain DSM 44549 / YS-314 / AJ 12310 / JCM 11189 / NBRC 100395).